A 466-amino-acid polypeptide reads, in one-letter code: Soluble pyridine nucleotide transhydrogenase (466 aa).

Glu-36 to Cys-45 contributes to the FAD binding site.

Belongs to the class-I pyridine nucleotide-disulfide oxidoreductase family. As to quaternary structure, homooligomer; probable homooctamer. The cofactor is FAD.

The protein localises to the cytoplasm. It catalyses the reaction NAD(+) + NADPH = NADH + NADP(+). Functionally, conversion of NADPH, generated by peripheral catabolic pathways, to NADH, which can enter the respiratory chain for energy generation. The chain is Soluble pyridine nucleotide transhydrogenase from Shigella flexneri.